Here is a 235-residue protein sequence, read N- to C-terminus: Lipoprotein-releasing system ATP-binding protein LolD (235 aa).

Residues 5 to 235 (LECRDIRKVY…LMTESASVEG (231 aa)) form the ABC transporter domain. ATP is bound at residue 41–48 (GSSGSGKS).

This sequence belongs to the ABC transporter superfamily. Lipoprotein translocase (TC 3.A.1.125) family. As to quaternary structure, the complex is composed of two ATP-binding proteins (LolD) and two transmembrane proteins (LolC and LolE).

It is found in the cell inner membrane. In terms of biological role, part of the ABC transporter complex LolCDE involved in the translocation of mature outer membrane-directed lipoproteins, from the inner membrane to the periplasmic chaperone, LolA. Responsible for the formation of the LolA-lipoprotein complex in an ATP-dependent manner. The sequence is that of Lipoprotein-releasing system ATP-binding protein LolD from Vibrio parahaemolyticus serotype O3:K6 (strain RIMD 2210633).